The following is a 1036-amino-acid chain: Nitrogen catabolic enzyme regulatory protein (1036 aa).

Residues 1–17 show a composition bias toward low complexity; sequence MAASTTTPTATTRPFFT. Disordered stretches follow at residues 1 to 126, 207 to 240, 256 to 298, 318 to 351, 590 to 743, 792 to 976, and 1000 to 1028; these read MAAS…HTQS, TDRTHRFSESAPQKSTSGIARLRKSSEQTQSQGS, TPAG…QSQH, GYLPRHLRKTSIDETSKRNPNRKRPADFSPHVSA, SSQG…PTTC, RGSG…PTTQ, and GMPNGQAGQMMGASSSSGPGSGPSRTGAE. The segment covering 23 to 34 has biased composition (basic and acidic residues); the sequence is TEHDFRFPRRPG. Residues 45 to 56 are compositionally biased toward low complexity; that stretch reads AAMSSSSANNNH. A run of 3 repeats spans residues 49–55, 87–92, and 105–110. Residues 49–110 form a 3 X approximate repeats region; the sequence is SSSANNNHNQ…INHQSSSNNN (62 aa). Low complexity predominate over residues 100 to 114; it reads NINHQSSSNNNISKN. The span at 652–661 shows a compositional bias: polar residues; sequence PRSQSQSFRQ. Over residues 703–714 the composition is skewed to low complexity; that stretch reads SSGLSSVPASRP. A compositionally biased stretch (polar residues) spans 723–736; that stretch reads QGSTTNLQGAAGNS. The GATA-type zinc-finger motif lies at 743 to 767; sequence CTNCFTQTTPLWRRNPDGQPLCNAC. A compositionally biased stretch (polar residues) spans 802 to 827; it reads GTSTRSKKNASMSAAARKNSTLSITS. Low complexity-rich tracts occupy residues 828–861 and 868–899; these read NANNQPPAQVATPPAQQQVRASSVNESESPASGP and AGSTPTSYHGSTGSTSGAVGGKSVIPIASAPP. Residues 927-961 are compositionally biased toward polar residues; the sequence is SAGSDQPVSAGAVSSSGMDVDSPANSTGSNETMPT. Residues 1000-1023 show a composition bias toward low complexity; sequence GMPNGQAGQMMGASSSSGPGSGPS.

As to quaternary structure, interacts with nmr.

The protein resides in the nucleus. Its function is as follows. Major nitrogen regulatory protein. During conditions of nitrogen limitation it turns on the expression of genes for enzymes which are required for the use of a variety of secondary nitrogen sources, including nitrates, purines, amino acids, and proteins. The chain is Nitrogen catabolic enzyme regulatory protein (nit-2) from Neurospora crassa (strain ATCC 24698 / 74-OR23-1A / CBS 708.71 / DSM 1257 / FGSC 987).